The sequence spans 249 residues: Homeobox protein TGIF2LX (249 aa).

Residues 1–27 show a composition bias toward basic and acidic residues; the sequence is MEAAADRPAETRSRVEKDSRRAKKDSP. Disordered stretches follow at residues 1 to 60 and 121 to 215; these read MEAA…KKKR and QRRG…EPVS. A compositionally biased stretch (polar residues) spans 28–46; that stretch reads AKTQSPAQDTSIMLRSNAD. Residues 55-118 constitute a DNA-binding region (homeobox; TALE-type); sequence EHKKKRKGYL…INARRRILPD (64 aa). Residues 159-172 are compositionally biased toward polar residues; that stretch reads DNVQSLPLRSSPKG. The span at 202 to 215 shows a compositional bias: low complexity; sequence VSNITSSSSPEPVS.

Belongs to the TALE/TGIF homeobox family.

It is found in the nucleus. Functionally, may have a transcription role in testis. The sequence is that of Homeobox protein TGIF2LX (TGIF2LX) from Miopithecus talapoin (Angolan talapoin).